The following is a 281-amino-acid chain: Small ribosomal subunit protein uS2 (281 aa).

A disordered region spans residues 225 to 281 (LMERKAEKPEEEETEEAAPRRERRARSGARRSRQNENEATAEAATEVAEAPEAEEAE). The span at 245-256 (RERRARSGARRS) shows a compositional bias: basic residues. Residues 262 to 272 (EATAEAATEVA) are compositionally biased toward low complexity.

It belongs to the universal ribosomal protein uS2 family.

In Porphyromonas gingivalis (strain ATCC 33277 / DSM 20709 / CIP 103683 / JCM 12257 / NCTC 11834 / 2561), this protein is Small ribosomal subunit protein uS2.